Consider the following 196-residue polypeptide: Probable GTP-binding protein EngB (196 aa).

The region spanning 24–196 (ELSEVALSGR…IWNLIEPYIS (173 aa)) is the EngB-type G domain. Residues 32–39 (GRSNVGKS), 59–63 (GKTQT), 77–80 (DVPG), 144–147 (TKED), and 176–178 (YSS) contribute to the GTP site. Residues Ser39 and Thr61 each contribute to the Mg(2+) site.

The protein belongs to the TRAFAC class TrmE-Era-EngA-EngB-Septin-like GTPase superfamily. EngB GTPase family. The cofactor is Mg(2+).

Its function is as follows. Necessary for normal cell division and for the maintenance of normal septation. In Staphylococcus aureus (strain Mu3 / ATCC 700698), this protein is Probable GTP-binding protein EngB.